A 66-amino-acid chain; its full sequence is Phylloseptin-S1 (66 aa).

An N-terminal signal peptide occupies residues 1-22 (MAFLKKSLFLVLFLGLVSLSIC). Positions 23-46 (EEEKRETEEEEHDQEEDDKSEEKR) are excised as a propeptide. The segment at 25–44 (EKRETEEEEHDQEEDDKSEE) is disordered. The span at 30-41 (EEEEHDQEEDDK) shows a compositional bias: acidic residues. Phe-65 carries the phenylalanine amide modification.

In terms of tissue distribution, expressed by the skin glands.

It is found in the secreted. The protein resides in the target cell membrane. Antimicrobial peptide with high activity against Gram-positive bacteria, low activity against Gram-negative bacteria, and moderate activity against fungi. Acts on bacterial biofilms (S.aureus) with the same potency than on bacteria. Acts by causing bacterial membrane disruption inducing leakage of the intracellular content followed by cell death. It adopts an alpha-helical amphipathic structure in membrane environments. Also shows highly potent antiparasitic activity against Leishmania species. Shows low hemolytic activity on horse and human erythrocytes (LC(50)=39 uM). Is also active on human monocytes (IC(50)=23 uM). The polypeptide is Phylloseptin-S1 (Phyllomedusa sauvagei (Sauvage's leaf frog)).